A 339-amino-acid polypeptide reads, in one-letter code: N-acetyl-gamma-glutamyl-phosphate reductase (339 aa).

Cysteine 145 is an active-site residue.

The protein belongs to the NAGSA dehydrogenase family. Type 1 subfamily.

Its subcellular location is the cytoplasm. It catalyses the reaction N-acetyl-L-glutamate 5-semialdehyde + phosphate + NADP(+) = N-acetyl-L-glutamyl 5-phosphate + NADPH + H(+). It participates in amino-acid biosynthesis; L-arginine biosynthesis; N(2)-acetyl-L-ornithine from L-glutamate: step 3/4. Catalyzes the NADPH-dependent reduction of N-acetyl-5-glutamyl phosphate to yield N-acetyl-L-glutamate 5-semialdehyde. This is N-acetyl-gamma-glutamyl-phosphate reductase from Thermotoga sp. (strain RQ2).